Consider the following 1320-residue polypeptide: Bifunctional protein PutA (1320 aa).

Residues 228-574 (LSRSLNRIIG…SFVNRIADTS (347 aa)) form a proline dehydrogenase region. The aldehyde dehydrogenase stretch occupies residues 653–1119 (QPVAAGEMSP…LANRPESALA (467 aa)). Residues Glu-883 and Cys-917 contribute to the active site.

In the N-terminal section; belongs to the proline dehydrogenase family. This sequence in the C-terminal section; belongs to the aldehyde dehydrogenase family. In terms of assembly, homodimer. FAD serves as cofactor.

The catalysed reaction is L-proline + a quinone = (S)-1-pyrroline-5-carboxylate + a quinol + H(+). It carries out the reaction L-glutamate 5-semialdehyde + NAD(+) + H2O = L-glutamate + NADH + 2 H(+). The protein operates within amino-acid degradation; L-proline degradation into L-glutamate; L-glutamate from L-proline: step 1/2. It participates in amino-acid degradation; L-proline degradation into L-glutamate; L-glutamate from L-proline: step 2/2. Its function is as follows. Oxidizes proline to glutamate for use as a carbon and nitrogen source and also function as a transcriptional repressor of the put operon. In Escherichia coli (strain K12), this protein is Bifunctional protein PutA (putA).